The following is a 782-amino-acid chain: Zinc finger and SCAN domain-containing protein 10 (782 aa).

Positions 1 to 37 (MLAEPVPDALEQEHPGAVKLEEDEVGEEDPRLAESRP) are disordered. The SCAN box domain occupies 1–71 (MLAEPVPDAL…GRLRELCNHW (71 aa)). Basic and acidic residues-rich tracts occupy residues 11–20 (EQEHPGAVKL) and 28–37 (EDPRLAESRP). Phosphoserine occurs at positions 160 and 206. Disordered stretches follow at residues 197–233 (LAPSSNWPMSPEPQEILQDPRESNPSQGPSWLEENSR) and 290–321 (SQTEKPEVAGEPLTQTVGQETSSTGWGGTPAD). C2H2-type zinc fingers lie at residues 292-315 (TEKPEVAGEPLTQTVGQETSSTGW), 321-343 (DGSEVVKVRGASDAPEPQGEMQF), 349-371 (GVNFPEMSHLQAHQLQSHPNLQP), 377-399 (SFRCLWCGKTFGRSSILKLHMRT), 421-443 (LTKHLLTHSSEPAFRCAECNQGF), 467-489 (EGKTKVPEMAAVLCSHCGQTFKR), 495-517 (RHLRNHAKDKDHLSSEDPGSLSS), 523-545 (PYVCSDCGKAFRQSEQLMIHTRR), 551-573 (RPFSCQVCGRCFTQNSQLISHQQ), 579-601 (KPHACPQCSKRFVRRAGLARHLL), 607-629 (RPYHCAQCGKSFRQMRDLTRHVR), 635-657 (KPCRCNECGEGFTQNAHLARHQR), 669-691 (ICGHRFRNSSNLARHRRSHTGER), and 697-719 (TCGRSFRRNAHLQRHLITHTGSK). A compositionally biased stretch (polar residues) spans 302–313 (LTQTVGQETSST). Q485 carries the post-translational modification N5-methylglutamine. Residues 491–522 (SSLKRHLRNHAKDKDHLSSEDPGSLSSSQESN) are disordered. The segment covering 500–509 (HAKDKDHLSS) has biased composition (basic and acidic residues). Residues 510–521 (EDPGSLSSSQES) are compositionally biased toward low complexity.

As to quaternary structure, interacts with POU5F1/OCT4 and SOX2. Post-translationally, methylated at Gln-485 by N6AMT1. In terms of tissue distribution, embryonic stem (ES) cell-specific. Not expressed in adult, except in testis.

It is found in the nucleus. Embryonic stem (ES) cell-specific transcription factor required to maintain ES cell pluripotency. Can both activate and /or repress expression of target genes, depending on the context. Specifically binds the 5'-[GA]CGCNNGCG[CT]-3' DNA consensus sequence. Regulates expression of POU5F1/OCT4, ZSCAN4 and ALYREF/THOC4. The protein is Zinc finger and SCAN domain-containing protein 10 (Zscan10) of Mus musculus (Mouse).